An 819-amino-acid polypeptide reads, in one-letter code: Kinesin-like protein KIN-13A (819 aa).

Residues 150 to 178 (EPFEPSPFIPKEMDEDDDDMLPGSQPGPS) are disordered. In terms of domain architecture, Kinesin motor spans 199 to 535 (KIKVVVRKRP…LRYADRVKSL (337 aa)). 289–296 (GQTGSGKT) contacts ATP. A disordered region spans residues 534 to 729 (SLSKGSNTRK…QSEKESSCDD (196 aa)). The span at 550-562 (TIPSSKDSSSAPS) shows a compositional bias: low complexity. 2 stretches are compositionally biased toward basic and acidic residues: residues 577-589 (QEKR…RKAA) and 614-631 (RGKE…ERVD). A compositionally biased stretch (polar residues) spans 632 to 652 (LNSSRISYNSKPQSVQSSANL). The segment covering 669–686 (YRDDKPERQSNYAKKDSG) has biased composition (basic and acidic residues). Positions 697–719 (QQAKQLQQQQRPTSASASQNSSR) are enriched in low complexity. Residues 736 to 767 (LEEEEALIAAHRKEIENTMEIVREEMNLLAEV) are a coiled coil.

This sequence belongs to the TRAFAC class myosin-kinesin ATPase superfamily. Kinesin family. KIN-13 subfamily. As to expression, ubiquitous.

Its subcellular location is the microsome. The polypeptide is Kinesin-like protein KIN-13A (Oryza sativa subsp. japonica (Rice)).